Reading from the N-terminus, the 79-residue chain is ATP synthase subunit c (79 aa).

2 helical membrane passes run 11 to 31 (IAAA…IGIL) and 53 to 73 (FFIV…LSLY).

This sequence belongs to the ATPase C chain family. In terms of assembly, F-type ATPases have 2 components, F(1) - the catalytic core - and F(0) - the membrane proton channel. F(1) has five subunits: alpha(3), beta(3), gamma(1), delta(1), epsilon(1). F(0) has three main subunits: a(1), b(2) and c(10-14). The alpha and beta chains form an alternating ring which encloses part of the gamma chain. F(1) is attached to F(0) by a central stalk formed by the gamma and epsilon chains, while a peripheral stalk is formed by the delta and b chains.

It is found in the cell inner membrane. Functionally, f(1)F(0) ATP synthase produces ATP from ADP in the presence of a proton or sodium gradient. F-type ATPases consist of two structural domains, F(1) containing the extramembraneous catalytic core and F(0) containing the membrane proton channel, linked together by a central stalk and a peripheral stalk. During catalysis, ATP synthesis in the catalytic domain of F(1) is coupled via a rotary mechanism of the central stalk subunits to proton translocation. Its function is as follows. Key component of the F(0) channel; it plays a direct role in translocation across the membrane. A homomeric c-ring of between 10-14 subunits forms the central stalk rotor element with the F(1) delta and epsilon subunits. This chain is ATP synthase subunit c, found in Blochmanniella floridana.